Reading from the N-terminus, the 152-residue chain is Arginine repressor (152 aa).

The protein belongs to the ArgR family.

It localises to the cytoplasm. It participates in amino-acid biosynthesis; L-arginine biosynthesis [regulation]. Functionally, regulates arginine biosynthesis genes. This is Arginine repressor from Thermotoga sp. (strain RQ2).